The chain runs to 360 residues: Peptide chain release factor 1 (360 aa).

Residue glutamine 233 is modified to N5-methylglutamine. Positions 283–305 (KLDAERAADRRSQVGSGDRSERI) are disordered.

Belongs to the prokaryotic/mitochondrial release factor family. Post-translationally, methylated by PrmC. Methylation increases the termination efficiency of RF1.

The protein resides in the cytoplasm. Functionally, peptide chain release factor 1 directs the termination of translation in response to the peptide chain termination codons UAG and UAA. The chain is Peptide chain release factor 1 from Methylocella silvestris (strain DSM 15510 / CIP 108128 / LMG 27833 / NCIMB 13906 / BL2).